Consider the following 127-residue polypeptide: uncharacterized protein (127 aa).

Residues 1 to 23 (MAGVRARAPLPLALLLSLPAAPG) form the signal peptide. The disordered stretch occupies residues 43-127 (CFEVGLRKPP…ACPPRAPLWR (85 aa)). Residues 59 to 70 (PPSFSSGSSRPL) are compositionally biased toward low complexity.

It localises to the secreted. This is an uncharacterized protein from Homo sapiens (Human).